The sequence spans 217 residues: Adenylate kinase (217 aa).

Position 10 to 15 (10 to 15) interacts with ATP; the sequence is GAGKGT. The NMP stretch occupies residues 30 to 59; sequence STGDMLRAAVKAGTPLGVEAKKVMDAGGLV. Residues threonine 31, arginine 36, 57–59, 85–88, and glutamine 92 each bind AMP; these read GLV and GFPR. The segment at 122–159 is LID; that stretch reads GRRAHLASGRTYHVKYNPPKVAGKDDLTGEDLVQRDDD. ATP contacts are provided by residues arginine 123 and 132-133; that span reads TY. Arginine 156 and arginine 167 together coordinate AMP. Residue glycine 203 coordinates ATP.

Belongs to the adenylate kinase family. Monomer.

It is found in the cytoplasm. The enzyme catalyses AMP + ATP = 2 ADP. It participates in purine metabolism; AMP biosynthesis via salvage pathway; AMP from ADP: step 1/1. Its function is as follows. Catalyzes the reversible transfer of the terminal phosphate group between ATP and AMP. Plays an important role in cellular energy homeostasis and in adenine nucleotide metabolism. The polypeptide is Adenylate kinase (Aromatoleum aromaticum (strain DSM 19018 / LMG 30748 / EbN1) (Azoarcus sp. (strain EbN1))).